Consider the following 167-residue polypeptide: NADH-quinone oxidoreductase subunit B 2 (167 aa).

[4Fe-4S] cluster is bound by residues Cys-38, Cys-39, Cys-103, and Cys-132.

Belongs to the complex I 20 kDa subunit family. NDH-1 is composed of 14 different subunits. Subunits NuoB, C, D, E, F, and G constitute the peripheral sector of the complex. It depends on [4Fe-4S] cluster as a cofactor.

Its subcellular location is the cell inner membrane. The enzyme catalyses a quinone + NADH + 5 H(+)(in) = a quinol + NAD(+) + 4 H(+)(out). Functionally, NDH-1 shuttles electrons from NADH, via FMN and iron-sulfur (Fe-S) centers, to quinones in the respiratory chain. The immediate electron acceptor for the enzyme in this species is believed to be ubiquinone. Couples the redox reaction to proton translocation (for every two electrons transferred, four hydrogen ions are translocated across the cytoplasmic membrane), and thus conserves the redox energy in a proton gradient. The polypeptide is NADH-quinone oxidoreductase subunit B 2 (Rhizobium etli (strain CIAT 652)).